We begin with the raw amino-acid sequence, 615 residues long: UvrABC system protein C (615 aa).

Positions 12 to 91 constitute a GIY-YIG domain; the sequence is EKPGVYIMKD…IKKYKPKYNV (80 aa). In terms of domain architecture, UVR spans 203–238; the sequence is DWLIQKLKEDMKKAAEELRFEEAARIRDQIFAIERT.

Belongs to the UvrC family. In terms of assembly, interacts with UvrB in an incision complex.

The protein resides in the cytoplasm. In terms of biological role, the UvrABC repair system catalyzes the recognition and processing of DNA lesions. UvrC both incises the 5' and 3' sides of the lesion. The N-terminal half is responsible for the 3' incision and the C-terminal half is responsible for the 5' incision. This is UvrABC system protein C from Thermoanaerobacter sp. (strain X514).